The primary structure comprises 30 residues: Trypsin inhibitor 6 (30 aa).

3 disulfides stabilise this stretch: Cys4/Cys21, Cys11/Cys23, and Cys17/Cys29.

Belongs to the protease inhibitor I7 (squash-type serine protease inhibitor) family.

It localises to the secreted. Functionally, strongly inhibits trypsin, weakly inhibits chymotrypsin. In Cyclanthera pedata (Achocha), this protein is Trypsin inhibitor 6.